Consider the following 542-residue polypeptide: CTP synthase (542 aa).

Positions Met-1–Met-265 are amidoligase domain. Residue Ser-13 participates in CTP binding. Residue Ser-13 coordinates UTP. Ser-14 to Ile-19 provides a ligand contact to ATP. Tyr-54 is a binding site for L-glutamine. Residue Asp-71 participates in ATP binding. Mg(2+) contacts are provided by Asp-71 and Glu-139. CTP-binding positions include Asp-146–Glu-148, Lys-186–Gln-191, and Lys-222. UTP contacts are provided by residues Lys-186–Gln-191 and Lys-222. A Glutamine amidotransferase type-1 domain is found at Thr-291–Leu-541. L-glutamine is bound at residue Ala-353. The Nucleophile; for glutamine hydrolysis role is filled by Cys-380. L-glutamine is bound by residues Phe-381 to Gln-384, Glu-404, and Arg-469. Residues His-514 and Glu-516 contribute to the active site.

It belongs to the CTP synthase family. In terms of assembly, homotetramer.

It carries out the reaction UTP + L-glutamine + ATP + H2O = CTP + L-glutamate + ADP + phosphate + 2 H(+). The enzyme catalyses L-glutamine + H2O = L-glutamate + NH4(+). It catalyses the reaction UTP + NH4(+) + ATP = CTP + ADP + phosphate + 2 H(+). The protein operates within pyrimidine metabolism; CTP biosynthesis via de novo pathway; CTP from UDP: step 2/2. Allosterically activated by GTP, when glutamine is the substrate; GTP has no effect on the reaction when ammonia is the substrate. The allosteric effector GTP functions by stabilizing the protein conformation that binds the tetrahedral intermediate(s) formed during glutamine hydrolysis. Inhibited by the product CTP, via allosteric rather than competitive inhibition. Functionally, catalyzes the ATP-dependent amination of UTP to CTP with either L-glutamine or ammonia as the source of nitrogen. Regulates intracellular CTP levels through interactions with the four ribonucleotide triphosphates. The polypeptide is CTP synthase (Bartonella henselae (strain ATCC 49882 / DSM 28221 / CCUG 30454 / Houston 1) (Rochalimaea henselae)).